The primary structure comprises 554 residues: MFCIQCEQTIRTPAGNGCSYAQGMCGKLAATSDLQDLLIYMLKGVSAWAVKARELGLPPTEADTFVPKAFFATLTNVNFDDERIIEYARKAESLRNVLKTQCTEAAQKAGIRLESLPDSASVLLGTSKPELLEQAKAALPNLGKDDIHEDVMALRLLCLYGLKGAAAYMEHARVLEQQSADIAAEFHRIMAFLGTDSVDADALFTVAMDIGQLNFKVMAMLDEGETAAFGHPEPTQVNTKPVKGKAILVSGHDMKDLELILKQTQGKGINVYTHGEMLPALAYPEFKQYPHLVGNYGSAWQNQQKEFANFPGAVVMTSNCIIDPNVGQYADRIFTRSIVGWPGVVHLEGDDFSAVIEKALSLEGFLYDEISHQITIGFARNALMAAAPAVVENVKNGSIRHFFLVGGCDGDKAERSYFTDFAKATPNDSLILTLGCGKYKFNKLEFGDINGIPRLLDIGQCNDAYSAIQLAIALSEVFECDINELPLSLVLSWFEQKAIVILLTLLSLGVKNIRTGPTPPAFLTPNLLKVLEDKFGLKNTTTVEADLNAILNVA.

Cysteine 3, cysteine 6, cysteine 18, and cysteine 25 together coordinate [2Fe-2S] cluster. Hybrid [4Fe-2O-2S] cluster-binding residues include histidine 252, glutamate 276, cysteine 320, cysteine 408, cysteine 436, cysteine 461, glutamate 495, and lysine 497. The residue at position 408 (cysteine 408) is a Cysteine persulfide.

It belongs to the HCP family. [2Fe-2S] cluster serves as cofactor. Requires hybrid [4Fe-2O-2S] cluster as cofactor.

The protein resides in the cytoplasm. The enzyme catalyses A + NH4(+) + H2O = hydroxylamine + AH2 + H(+). In terms of biological role, catalyzes the reduction of hydroxylamine to form NH(3) and H(2)O. This Shewanella amazonensis (strain ATCC BAA-1098 / SB2B) protein is Hydroxylamine reductase.